The sequence spans 3583 residues: Surfactin synthase subunit 2 (3583 aa).

Carrier domains follow at residues 965 to 1039 (APKT…EENE), 2005 to 2080 (APET…EASA), and 3034 to 3108 (APTT…ERAE). O-(pantetheine 4'-phosphoryl)serine is present on residues Ser999, Ser2040, and Ser3069.

Belongs to the ATP-dependent AMP-binding enzyme family. Requires pantetheine 4'-phosphate as cofactor.

The protein operates within antibiotic biosynthesis; surfactin biosynthesis. This protein is a multifunctional enzyme able to activate and polymerize the amino acids Leu, Glu, Asp and Val. Activation sites for these AA consist of individual domains. The protein is Surfactin synthase subunit 2 (srfAB) of Bacillus subtilis (strain 168).